Here is a 151-residue protein sequence, read N- to C-terminus: Ribosome maturation factor RimP (151 aa).

Belongs to the RimP family.

It localises to the cytoplasm. Required for maturation of 30S ribosomal subunits. The polypeptide is Ribosome maturation factor RimP (Persephonella marina (strain DSM 14350 / EX-H1)).